A 344-amino-acid polypeptide reads, in one-letter code: Heat-inducible transcription repressor HrcA (344 aa).

Belongs to the HrcA family.

In terms of biological role, negative regulator of class I heat shock genes (grpE-dnaK-dnaJ and groELS operons). Prevents heat-shock induction of these operons. The chain is Heat-inducible transcription repressor HrcA from Moorella thermoacetica (strain ATCC 39073 / JCM 9320).